The following is a 131-amino-acid chain: C-type natriuretic peptide 1 (131 aa).

The first 22 residues, 1–22 (MLYPALLCAALLLIAPLGHTEG), serve as a signal peptide directing secretion. Residues 23–109 (RTLHPSPDAI…KRAVMDRSRR (87 aa)) constitute a propeptide that is removed on maturation. Residues Cys-115 and Cys-131 are joined by a disulfide bond.

Belongs to the natriuretic peptide family. Expressed in brain and to a low extent in atrium.

Its subcellular location is the secreted. Exhibits natriuretic and vasodepressant activity. Has a cGMP-stimulating activity. This Oncorhynchus mykiss (Rainbow trout) protein is C-type natriuretic peptide 1.